A 173-amino-acid polypeptide reads, in one-letter code: ATP synthase subunit b (173 aa).

The helical transmembrane segment at 12 to 32 threads the bilayer; the sequence is LDVNPGLVVWTLVTFLVVVLV.

Belongs to the ATPase B chain family. F-type ATPases have 2 components, F(1) - the catalytic core - and F(0) - the membrane proton channel. F(1) has five subunits: alpha(3), beta(3), gamma(1), delta(1), epsilon(1). F(0) has three main subunits: a(1), b(2) and c(10-14). The alpha and beta chains form an alternating ring which encloses part of the gamma chain. F(1) is attached to F(0) by a central stalk formed by the gamma and epsilon chains, while a peripheral stalk is formed by the delta and b chains.

It is found in the cell inner membrane. Functionally, f(1)F(0) ATP synthase produces ATP from ADP in the presence of a proton or sodium gradient. F-type ATPases consist of two structural domains, F(1) containing the extramembraneous catalytic core and F(0) containing the membrane proton channel, linked together by a central stalk and a peripheral stalk. During catalysis, ATP synthesis in the catalytic domain of F(1) is coupled via a rotary mechanism of the central stalk subunits to proton translocation. Its function is as follows. Component of the F(0) channel, it forms part of the peripheral stalk, linking F(1) to F(0). This chain is ATP synthase subunit b, found in Leptospira interrogans serogroup Icterohaemorrhagiae serovar copenhageni (strain Fiocruz L1-130).